The following is a 154-amino-acid chain: Anaerobic ribonucleoside-triphosphate reductase-activating protein (154 aa).

Residues Cys-26, Cys-30, and Cys-33 each coordinate [4Fe-4S] cluster. S-adenosyl-L-methionine contacts are provided by residues 32-34 (GCY) and Gly-74.

This sequence belongs to the organic radical-activating enzymes family. Forms a tetramer composed of two NrdD and two NrdG subunits. Requires [4Fe-4S] cluster as cofactor.

It localises to the cytoplasm. It carries out the reaction glycyl-[protein] + reduced [flavodoxin] + S-adenosyl-L-methionine = glycin-2-yl radical-[protein] + semiquinone [flavodoxin] + 5'-deoxyadenosine + L-methionine + H(+). In terms of biological role, activation of anaerobic ribonucleoside-triphosphate reductase under anaerobic conditions by generation of an organic free radical, using S-adenosylmethionine and reduced flavodoxin as cosubstrates to produce 5'-deoxy-adenosine. The sequence is that of Anaerobic ribonucleoside-triphosphate reductase-activating protein (nrdG) from Escherichia coli O157:H7.